We begin with the raw amino-acid sequence, 421 residues long: D-aspartate ligase (421 aa).

An ATP-grasp domain is found at 130-332 (YEVCEEYDLP…LARFVTEDRV (203 aa)). Residue 161-224 (PFEFPVALKP…QDFIPGDDSN (64 aa)) participates in ATP binding. Residues aspartate 290, glutamate 304, and asparagine 306 each contribute to the Mg(2+) site.

Requires Mg(2+) as cofactor.

It catalyses the reaction [beta-GlcNAc-(1-&gt;4)-Mur2Ac(oyl-L-Ala-gamma-D-Glu-L-Lys-D-Ala-D-Ala)](n) + n D-aspartate + n ATP = [beta-GlcNAc-(1-&gt;4)-Mur2Ac(oyl-L-Ala-gamma-D-Glu-6-N-(beta-D-Asp)-L-Lys-D-Ala-D-Ala)]n + n ADP + n phosphate + n H(+). Its pathway is cell wall biogenesis; peptidoglycan biosynthesis. Catalyzes the addition of D-aspartate onto the lysine residue in the peptidoglycan precursor UDP-MurNAc-pentapeptide. The ligation occurs between the beta-carboxylate of D-Asp and the epsilon-amino group of L-Lys. Is highly specific for D-aspartate, as L-aspartate, D-glutamate, D-alanine, D-iso-asparagine and D-malate are not substrates. The chain is D-aspartate ligase from Enterococcus faecium (strain Aus0004).